Consider the following 415-residue polypeptide: Beta-2 adrenergic receptor (415 aa).

At 1–34 (MGQPANRSVFLLAPNGSHAPDQGDSQERSEAWVV) the chain is on the extracellular side. Residues Asn-6 and Asn-15 are each glycosylated (N-linked (GlcNAc...) asparagine). Residues 35–58 (GMGIVMSLIVLAIVFGNVLVITAI) form a helical membrane-spanning segment. Topologically, residues 59–71 (ARFERLQTVTNYF) are cytoplasmic. Residues 72 to 95 (ITSLACADLVMGLAVVPFGASHIL) form a helical membrane-spanning segment. The Extracellular portion of the chain corresponds to 96 to 106 (MKMWTFGNFWC). 2 disulfide bridges follow: Cys-106-Cys-191 and Cys-184-Cys-190. The chain crosses the membrane as a helical span at residues 107–129 (EFWTSIDVLCVTASIETLCVIAV). Residues 130–150 (DRYFAITSPFKYQSLLTKNKA) are Cytoplasmic-facing. Position 141 is a phosphotyrosine (Tyr-141). A helical membrane pass occupies residues 151–174 (RVVILMVWIVSGLTSFLPIQMHWY). Over 175–196 (RATHQEAINCYAKETCCDFFTN) the chain is Extracellular. The helical transmembrane segment at 197–220 (QAYAIASSIVSFYLPLVVMVFVYS) threads the bilayer. Residues 221–274 (RVFQVAQRQLQKIDRSEGRFHAQNLSQVEQDGRSGHGHRRSSKFCLKEHKALKT) lie on the Cytoplasmic side of the membrane. Phosphoserine is present on Ser-246. Phosphoserine; by PKA is present on residues Ser-261 and Ser-262. Cys-265 carries S-palmitoyl cysteine lipidation. A helical transmembrane segment spans residues 275–298 (LGIIMGTFTLCWLPFFIVNIVHVI). At 299–305 (QDNLIPK) the chain is on the extracellular side. Residues 306 to 329 (EVYILLNWVGYVNSAFNPLIYCRS) traverse the membrane as a helical segment. The Cytoplasmic segment spans residues 330-415 (PDFRIAFQEL…RNCSTNDSLL (86 aa)). Cys-341 is lipidated: S-palmitoyl cysteine. Phosphoserine; by PKA is present on residues Ser-345 and Ser-346. Ser-355 bears the Phosphoserine; by BARK mark. Residues 379-415 (SELLCEDPPGTEDRQGTVPSDSVDSQGRNCSTNDSLL) form a disordered region. A 4-hydroxyproline mark is found at Pro-387 and Pro-397. Positions 395–415 (TVPSDSVDSQGRNCSTNDSLL) are enriched in polar residues. Residues 412-415 (DSLL) carry the PDZ-binding motif.

This sequence belongs to the G-protein coupled receptor 1 family. Adrenergic receptor subfamily. ADRB2 sub-subfamily. As to quaternary structure, binds NHERF1 and GPRASP1. Interacts with ARRB1 and ARRB2. Interacts with SRC. Interacts with USP20 and USP33. Interacts with VHL; the interaction, which is increased on hydroxylation of ADRB2, ubiquitinates ADRB2 leading to its degradation. Interacts with EGLN3; the interaction hydroxylates ADRB2 facilitating VHL-E3 ligase-mediated ubiquitination. Interacts (via PDZ-binding motif) with SNX27 (via PDZ domain); the interaction is required when endocytosed to prevent degradation in lysosomes and promote recycling to the plasma membrane. Interacts with CNIH4. Interacts with ARRDC3. Interacts with NEDD4. Interacts with MARCHF2. In terms of processing, palmitoylated; may reduce accessibility of Ser-345 and Ser-346 by anchoring Cys-341 to the plasma membrane. Agonist stimulation promotes depalmitoylation and further allows Ser-345 and Ser-346 phosphorylation. Post-translationally, phosphorylated by PKA and BARK upon agonist stimulation, which mediates homologous desensitization of the receptor. PKA-mediated phosphorylation seems to facilitate phosphorylation by BARK. Phosphorylation of Tyr-141 is induced by insulin and leads to supersensitization of the receptor. In terms of processing, polyubiquitinated. Agonist-induced ubiquitination leads to sort internalized receptors to the lysosomes for degradation. Deubiquitination by USP20 and USP33, leads to ADRB2 recycling and resensitization after prolonged agonist stimulation. USP20 and USP33 are constitutively associated and are dissociated immediately after agonist stimulation. Ubiquitination by the VHL-E3 ligase complex is oxygen-dependent. Post-translationally, hydroxylation by EGLN3 occurs only under normoxia and increases the interaction with VHL and the subsequent ubiquitination and degradation of ADRB2. Palmitoylated. Mainly palmitoylated at Cys-341. Palmitoylation may reduce accessibility of phosphorylation sites by anchoring the receptor to the plasma membrane. Agonist stimulation promotes depalmitoylation and further allows Ser-345 and Ser-346 phosphorylation. Also undergoes transient, ligand-induced palmitoylation at Cys-265 probably by ZDHHC9, ZDHHC14 and ZDHHC18 within the Golgi. Palmitoylation at Cys-265 requires phosphorylation by PKA and receptor internalization and stabilizes the receptor. Could be depalmitoylated by LYPLA1 at the plasma membrane.

It localises to the cell membrane. The protein resides in the early endosome. The protein localises to the golgi apparatus. Functionally, beta-adrenergic receptors mediate the catecholamine-induced activation of adenylate cyclase through the action of G proteins. The beta-2-adrenergic receptor binds epinephrine with an approximately 30-fold greater affinity than it does norepinephrine. The protein is Beta-2 adrenergic receptor (ADRB2) of Canis lupus familiaris (Dog).